The primary structure comprises 348 residues: RNA 3'-terminal phosphate cyclase (348 aa).

Residues Gln-107 and 290–294 (HLADQ) contribute to the ATP site. The active-site Tele-AMP-histidine intermediate is the His-316.

The protein belongs to the RNA 3'-terminal cyclase family. Type 1 subfamily.

The protein localises to the cytoplasm. It carries out the reaction a 3'-end 3'-phospho-ribonucleotide-RNA + ATP = a 3'-end 2',3'-cyclophospho-ribonucleotide-RNA + AMP + diphosphate. In terms of biological role, catalyzes the conversion of 3'-phosphate to a 2',3'-cyclic phosphodiester at the end of RNA. The mechanism of action of the enzyme occurs in 3 steps: (A) adenylation of the enzyme by ATP; (B) transfer of adenylate to an RNA-N3'P to produce RNA-N3'PP5'A; (C) and attack of the adjacent 2'-hydroxyl on the 3'-phosphorus in the diester linkage to produce the cyclic end product. The biological role of this enzyme is unknown but it is likely to function in some aspects of cellular RNA processing. The sequence is that of RNA 3'-terminal phosphate cyclase from Trichormus variabilis (strain ATCC 29413 / PCC 7937) (Anabaena variabilis).